The sequence spans 168 residues: Transcriptional repressor NrdR (168 aa).

A zinc finger lies at 3 to 34; sequence CPYCGFAQDRVVDSRESKEADSIRRRRECERC. In terms of domain architecture, ATP-cone spans 49–139; it reads YMVVKKDGRR…VYRDFKDVNE (91 aa).

It belongs to the NrdR family. It depends on Zn(2+) as a cofactor.

In terms of biological role, negatively regulates transcription of bacterial ribonucleotide reductase nrd genes and operons by binding to NrdR-boxes. In Acidobacterium capsulatum (strain ATCC 51196 / DSM 11244 / BCRC 80197 / JCM 7670 / NBRC 15755 / NCIMB 13165 / 161), this protein is Transcriptional repressor NrdR.